Consider the following 203-residue polypeptide: Imidazole glycerol phosphate synthase subunit HisH 1 (203 aa).

The Glutamine amidotransferase type-1 domain maps to 1 to 203 (MIAIIDYNAG…KMIENFVELI (203 aa)). C82 serves as the catalytic Nucleophile. Active-site residues include H184 and E186.

As to quaternary structure, heterodimer of HisH and HisF.

The protein localises to the cytoplasm. The catalysed reaction is 5-[(5-phospho-1-deoxy-D-ribulos-1-ylimino)methylamino]-1-(5-phospho-beta-D-ribosyl)imidazole-4-carboxamide + L-glutamine = D-erythro-1-(imidazol-4-yl)glycerol 3-phosphate + 5-amino-1-(5-phospho-beta-D-ribosyl)imidazole-4-carboxamide + L-glutamate + H(+). The enzyme catalyses L-glutamine + H2O = L-glutamate + NH4(+). It functions in the pathway amino-acid biosynthesis; L-histidine biosynthesis; L-histidine from 5-phospho-alpha-D-ribose 1-diphosphate: step 5/9. In terms of biological role, IGPS catalyzes the conversion of PRFAR and glutamine to IGP, AICAR and glutamate. The HisH subunit provides the glutamine amidotransferase activity that produces the ammonia necessary to HisF for the synthesis of IGP and AICAR. The chain is Imidazole glycerol phosphate synthase subunit HisH 1 (hisH1) from Methanococcus maripaludis (strain DSM 14266 / JCM 13030 / NBRC 101832 / S2 / LL).